Here is a 488-residue protein sequence, read N- to C-terminus: ATP-dependent RNA helicase dbp3 (488 aa).

A compositionally biased stretch (basic and acidic residues) spans 1-29 (MAKREHQDQTGDSRPSKKSKGTKDTKKNT). The interval 1–42 (MAKREHQDQTGDSRPSKKSKGTKDTKKNTEVSPPYFQSPALD) is disordered. A Q motif motif is present at residues 92–100 (GFASPTAIQ). The Helicase ATP-binding domain occupies 104–279 (WPLLFAGRDV…STFMTSPVTV (176 aa)). ATP is bound at residue 117-124 (AETGSGKT). The DEAD box signature appears at 226–229 (DEAD). In terms of domain architecture, Helicase C-terminal spans 306–457 (EKEQRLVQIL…EVPEALLKFG (152 aa)).

It belongs to the DEAD box helicase family. DDX5/DBP2 subfamily.

The protein localises to the nucleus. It is found in the nucleolus. The enzyme catalyses ATP + H2O = ADP + phosphate + H(+). ATP-dependent RNA helicase required for 60S ribosomal subunit synthesis. Involved in efficient pre-rRNA processing, predominantly at site A3, which is necessary for the normal formation of 25S and 5.8S rRNAs. This Emericella nidulans (strain FGSC A4 / ATCC 38163 / CBS 112.46 / NRRL 194 / M139) (Aspergillus nidulans) protein is ATP-dependent RNA helicase dbp3 (dbp3).